A 334-amino-acid chain; its full sequence is Magnesium-chelatase 38 kDa subunit (334 aa).

An ATP-binding site is contributed by 36 to 43; sequence GDRGTGKS.

It belongs to the Mg-chelatase subunits D/I family.

The enzyme catalyses protoporphyrin IX + Mg(2+) + ATP + H2O = Mg-protoporphyrin IX + ADP + phosphate + 3 H(+). Its pathway is porphyrin-containing compound metabolism; bacteriochlorophyll biosynthesis. In terms of biological role, involved in bacteriochlorophyll biosynthesis; introduces a magnesium ion into protoporphyrin IX to yield Mg-protoporphyrin IX. This chain is Magnesium-chelatase 38 kDa subunit (bchI), found in Cereibacter sphaeroides (strain ATCC 17023 / DSM 158 / JCM 6121 / CCUG 31486 / LMG 2827 / NBRC 12203 / NCIMB 8253 / ATH 2.4.1.) (Rhodobacter sphaeroides).